Reading from the N-terminus, the 191-residue chain is Gastrokine-3 (191 aa).

The N-terminal stretch at 1–30 is a signal peptide; that stretch reads MPLHSLERDNMRRLIAPSILVTVFLVPALA. Asn33 is a glycosylation site (N-linked (GlcNAc...) asparagine). The region spanning 63–155 is the BRICHOS domain; sequence NSVQSEWDGV…LCRAVPTYFA (93 aa). Cys90 and Cys147 are oxidised to a cystine.

The protein belongs to the gastrokine family. As to expression, expressed in stomach. Present in mucus cells at the base of antral glands, and Brunner glands of the duodenum. Present at lower levels in the mucus neck cell region of the fundus (at protein level).

The protein localises to the secreted. Functionally, inhibits gastric epithelial cell proliferation. The chain is Gastrokine-3 (Gkn3) from Mus musculus (Mouse).